The primary structure comprises 116 residues: uncharacterized protein (116 aa).

2 helical membrane passes run 24 to 44 (VPFA…VLTA) and 70 to 90 (VILT…IILS).

It is found in the membrane. This is an uncharacterized protein from Saccharomyces cerevisiae (strain ATCC 204508 / S288c) (Baker's yeast).